A 249-amino-acid chain; its full sequence is tRNA (guanine-N(1)-)-methyltransferase (249 aa).

Residues glycine 117 and 137–142 (LGDFVL) each bind S-adenosyl-L-methionine.

The protein belongs to the RNA methyltransferase TrmD family. Homodimer.

The protein resides in the cytoplasm. It catalyses the reaction guanosine(37) in tRNA + S-adenosyl-L-methionine = N(1)-methylguanosine(37) in tRNA + S-adenosyl-L-homocysteine + H(+). Specifically methylates guanosine-37 in various tRNAs. The polypeptide is tRNA (guanine-N(1)-)-methyltransferase (Janthinobacterium sp. (strain Marseille) (Minibacterium massiliensis)).